A 260-amino-acid polypeptide reads, in one-letter code: Snake venom serine protease homolog 2 (260 aa).

The first 18 residues, 1–18 (MVLIRVLANLLVLQLSYA), serve as a signal peptide directing secretion. The propeptide occupies 19–24 (QKSSEL). The 227-residue stretch at 25-251 (VIGGDECNIN…YTDWIQSIIA (227 aa)) folds into the Peptidase S1 domain. Intrachain disulfides connect Cys31–Cys165, Cys52–Cys68, Cys100–Cys258, Cys144–Cys212, Cys176–Cys191, and Cys202–Cys227. N-linked (GlcNAc...) asparagine glycosylation is present at Asn123. Asn253 is a glycosylation site (N-linked (GlcNAc...) asparagine).

The protein belongs to the peptidase S1 family. Snake venom subfamily. As to expression, expressed by the venom gland.

It localises to the secreted. In terms of biological role, snake venom serine protease homolog that may act in the hemostasis system of the prey. This Macrovipera lebetinus (Levantine viper) protein is Snake venom serine protease homolog 2.